The following is a 47-amino-acid chain: High light-inducible protein HliC (47 aa).

The Cytoplasmic portion of the chain corresponds to 1-14; that stretch reads MNNENSKFGFTAFA. The Chlorophyll-binding motif signature appears at 15–20; the sequence is ENWNGR. A transmembrane span lies at residues 15–36; sequence ENWNGRLAMIGFSSALILELVS. Residues 37-47 lie on the Lumenal, thylakoid side of the membrane; the sequence is GQGVLHFFGIL.

This sequence belongs to the Hlip family. As to quaternary structure, forms heterodimers with both HliA and HliB; these are associated with photosystem II (PSII) assembly intermediates containing CP47 (psbB). In the absence of CP47 (psbB) and HliD, forms a homooligomer in vivo that binds 2 chlorophyll a and 1 beta-carotenoid per monomer. Cofractionates in an approximately 50 kDa fraction the thylakoid membrane with HliD. Associated in vivo with monomeric PSII. Purified in several chlorophyll- and carotenoid-containing complexes, including photosystem II (PSII) assembly intermediate complex RCII* (iD1, D1, D2, PsbE, PsbF, PsbI, Ycf39, Ycf48, HliC and HliD) and the Ycf39-Hlip complex (Ycf39, HliC, HliD and pigments).

It localises to the cellular thylakoid membrane. Forms a number of heteromers involved in photosystem II (PSII) assembly and/or repair under high light stress. Required for binding of chlorophyll and carotenoids by the Ycf39-Hlip complex. The Ycf39-Hlip complex binds D1 at an early stage of PSII assembly along with Ycf48, ribosomes and ChlG, the last enzyme in chlorophyll biosynthesis; it may be involved in chlorophyll reuse and delivery to D1 in the initial stages of PSII assembly. HliA-HliC and HliB-HliC heterodimers bind chlorophyll and carotenoids in a 1:0.6 ratio. Complexes bind mostly beta-carotenoid, but minor amounts of echinenone and beta-crytoxanthin are also detected. The complexes efficiently quench chlorophyll fluorescence, contributing to photoprotection. Deletion of 4 to 5 members of the Hlip family suggests the proteins are involved in regulation of chlorophyll biosynthesis, in stabilization of chlorophyll-binding proteins and/or in reuse of chlorophylls, and may regulate tetrapyrrole biosynthesis. Might bind chlorophyll and/or carotenoids in association with HliD (called the ScpBE pair). Functionally, the Hlips might regulate tetrapyrrole biosynthesis, maybe at the level of aminolevulinic acid synthesis and probably stabilize PSII assembly intermediates. The chain is High light-inducible protein HliC (hliC) from Synechocystis sp. (strain ATCC 27184 / PCC 6803 / Kazusa).